A 309-amino-acid polypeptide reads, in one-letter code: MKSRGREMFKVGPIGSQRAYLKNLEWEEKGRNMISSIYVAFDKDTINSIQFSYCQNGGHVVSKKYGMSDAQKQKYGSYNGRFHVMFVFALVTDDHVKTNLCNIQVRLNDDEFVTGLSAIYLCKGITNLNIHTNQGKHGPICDRYSSSKNIMDNYKVEIDVKIRDRREFGGFFGSFDNYGTLTSIGIYVCPITRINDVALRTNYKVTDDYDDQSTFYQSSGPLTTINHNRKLEYQMPHEVSDVKPIVHNPNFEDKISLYQSSDRLARSTNTRTLEYQIPEFLDVNPIGRKSKLKYGIFSKLARLFRNLLD.

The Jacalin-type lectin domain maps to 8–190; the sequence is MFKVGPIGSQ…LTSIGIYVCP (183 aa).

The protein belongs to the jacalin lectin family.

The sequence is that of Jacalin-related lectin 25 (JAL25) from Arabidopsis thaliana (Mouse-ear cress).